Reading from the N-terminus, the 155-residue chain is Ribosome maturation factor RimP (155 aa).

This sequence belongs to the RimP family.

Its subcellular location is the cytoplasm. Its function is as follows. Required for maturation of 30S ribosomal subunits. This chain is Ribosome maturation factor RimP, found in Staphylococcus carnosus (strain TM300).